We begin with the raw amino-acid sequence, 332 residues long: tRNA uridine(34) hydroxylase (332 aa).

One can recognise a Rhodanese domain in the interval 127–221; it reads SDPETVLIDT…YLEEVPKEKS (95 aa). Cys181 functions as the Cysteine persulfide intermediate in the catalytic mechanism. The disordered stretch occupies residues 308-332; the sequence is AKKLAQLNKQKKQQAKEAARKKAQQ. Positions 321–332 are enriched in basic and acidic residues; the sequence is QAKEAARKKAQQ.

This sequence belongs to the TrhO family.

It carries out the reaction uridine(34) in tRNA + AH2 + O2 = 5-hydroxyuridine(34) in tRNA + A + H2O. Catalyzes oxygen-dependent 5-hydroxyuridine (ho5U) modification at position 34 in tRNAs. In Francisella tularensis subsp. tularensis (strain FSC 198), this protein is tRNA uridine(34) hydroxylase.